We begin with the raw amino-acid sequence, 259 residues long: Deoxyribose-phosphate aldolase (259 aa).

The active-site Proton donor/acceptor is D102. The active-site Schiff-base intermediate with acetaldehyde is K167. K201 acts as the Proton donor/acceptor in catalysis.

The protein belongs to the DeoC/FbaB aldolase family. DeoC type 2 subfamily.

Its subcellular location is the cytoplasm. The catalysed reaction is 2-deoxy-D-ribose 5-phosphate = D-glyceraldehyde 3-phosphate + acetaldehyde. Its pathway is carbohydrate degradation; 2-deoxy-D-ribose 1-phosphate degradation; D-glyceraldehyde 3-phosphate and acetaldehyde from 2-deoxy-alpha-D-ribose 1-phosphate: step 2/2. Its function is as follows. Catalyzes a reversible aldol reaction between acetaldehyde and D-glyceraldehyde 3-phosphate to generate 2-deoxy-D-ribose 5-phosphate. In Escherichia coli O1:K1 / APEC, this protein is Deoxyribose-phosphate aldolase.